The sequence spans 314 residues: Ribonuclease Z (314 aa).

Residues histidine 62, histidine 64, aspartate 66, histidine 67, histidine 144, aspartate 215, and histidine 273 each coordinate Zn(2+). The active-site Proton acceptor is the aspartate 66.

It belongs to the RNase Z family. In terms of assembly, homodimer. Zn(2+) is required as a cofactor.

The catalysed reaction is Endonucleolytic cleavage of RNA, removing extra 3' nucleotides from tRNA precursor, generating 3' termini of tRNAs. A 3'-hydroxy group is left at the tRNA terminus and a 5'-phosphoryl group is left at the trailer molecule.. In terms of biological role, zinc phosphodiesterase, which displays some tRNA 3'-processing endonuclease activity. Probably involved in tRNA maturation, by removing a 3'-trailer from precursor tRNA. This Prochlorococcus marinus (strain NATL1A) protein is Ribonuclease Z.